The following is a 260-amino-acid chain: 14-3-3-like protein (260 aa).

It belongs to the 14-3-3 family.

The protein is 14-3-3-like protein of Pisum sativum (Garden pea).